The chain runs to 127 residues: MALLSAVKGKLISVIGDEDTCVGFLLGGIGEINKNRHPNFMVVDKNTAVSEIEDCFKRFIKRDDIDIILINQNYAEMIRHVIDAHTSPTPAVLEIPSKDHPYDASKDSILRRAKGMFNPDDMVANRG.

This sequence belongs to the V-ATPase F subunit family. As to quaternary structure, V-ATPase is a heteromultimeric enzyme made up of two complexes: the ATP-hydrolytic V1 complex and the proton translocation V0 complex. The V1 complex consists of three catalytic AB heterodimers that form a heterohexamer, three peripheral stalks each consisting of EG heterodimers, one central rotor including subunits D and F, and the regulatory subunits C and H. The proton translocation complex V0 consists of the proton transport subunit a, a ring of proteolipid subunits c9c'', rotary subunit d, subunits e and f, and the accessory subunits VhaAC45 and ATP6AP2.

Its function is as follows. Subunit of the V1 complex of vacuolar(H+)-ATPase (V-ATPase), a multisubunit enzyme composed of a peripheral complex (V1) that hydrolyzes ATP and a membrane integral complex (V0) that translocates protons. V-ATPase is responsible for acidifying and maintaining the pH of intracellular compartments and in some cell types, is targeted to the plasma membrane, where it is responsible for acidifying the extracellular environment. The sequence is that of V-type proton ATPase subunit F from Aedes aegypti (Yellowfever mosquito).